The sequence spans 157 residues: MALLTTGKSFIRTVEKSGAVAVYAPLEGGFEGRYVRRLRCSGYSVVNLTARGLGDVAAYLTQYHGIRPPHLGKKDIAGSGAAVGLRYYVPGIASYQLENLPQKSKGIILWIIEGFVLSRQEQEYLVSLTQDNPQIKVVVEMGGDRQFSFKPLADLLV.

This sequence belongs to the complex I NdhN subunit family. NDH-1 can be composed of about 15 different subunits; different subcomplexes with different compositions have been identified which probably have different functions.

Its subcellular location is the cellular thylakoid membrane. It carries out the reaction a plastoquinone + NADH + (n+1) H(+)(in) = a plastoquinol + NAD(+) + n H(+)(out). The catalysed reaction is a plastoquinone + NADPH + (n+1) H(+)(in) = a plastoquinol + NADP(+) + n H(+)(out). Functionally, NDH-1 shuttles electrons from an unknown electron donor, via FMN and iron-sulfur (Fe-S) centers, to quinones in the respiratory and/or the photosynthetic chain. The immediate electron acceptor for the enzyme in this species is believed to be plastoquinone. Couples the redox reaction to proton translocation, and thus conserves the redox energy in a proton gradient. Cyanobacterial NDH-1 also plays a role in inorganic carbon-concentration. In Picosynechococcus sp. (strain ATCC 27264 / PCC 7002 / PR-6) (Agmenellum quadruplicatum), this protein is NAD(P)H-quinone oxidoreductase subunit N.